The primary structure comprises 322 residues: uncharacterized protein (322 aa).

A signal peptide spans 1 to 32 (MRDGIGKRAASALFLCGVLVMLAVSSAIVSSA).

This is an uncharacterized protein from Bacillus subtilis (strain 168).